The chain runs to 347 residues: uncharacterized protein (347 aa).

Residues 1 to 44 (MWNPKKKSEALAKFKSFPYPKPGTSNVLDSKEGDTRRKYFTKTH) lie on the Cytoplasmic side of the membrane. The chain crosses the membrane as a helical; Signal-anchor for type II membrane protein span at residues 45–62 (LHRLFVFVVLLLCSGYFL). At 63-347 (KHTLLTRPKE…RGWRKLVPFL (285 aa)) the chain is on the lumenal side.

The protein belongs to the glycosyltransferase 34 family.

The protein localises to the endoplasmic reticulum membrane. This is an uncharacterized protein from Schizosaccharomyces pombe (strain 972 / ATCC 24843) (Fission yeast).